A 285-amino-acid chain; its full sequence is UPF0354 protein SACOL1793 (285 aa).

This sequence belongs to the UPF0354 family.

The protein is UPF0354 protein SACOL1793 of Staphylococcus aureus (strain COL).